Reading from the N-terminus, the 120-residue chain is Large ribosomal subunit protein uL18 (120 aa).

It belongs to the universal ribosomal protein uL18 family. In terms of assembly, part of the 50S ribosomal subunit; part of the 5S rRNA/L5/L18/L25 subcomplex. Contacts the 5S and 23S rRNAs.

This is one of the proteins that bind and probably mediate the attachment of the 5S RNA into the large ribosomal subunit, where it forms part of the central protuberance. This chain is Large ribosomal subunit protein uL18, found in Rhodospirillum rubrum (strain ATCC 11170 / ATH 1.1.1 / DSM 467 / LMG 4362 / NCIMB 8255 / S1).